The sequence spans 311 residues: Transcription factor BIM2 (311 aa).

2 disordered regions span residues 1-60 (MRTG…RRSK) and 271-311 (ANQG…MKTL). 2 stretches are compositionally biased toward basic and acidic residues: residues 33–44 (SNRDSKENDKAS) and 51–60 (SVTEQRRRSK). The region spanning 45–95 (AIRSKHSVTEQRRRSKINERFQILRELIPNSEQKRDTASFLLEVIDYVQYL) is the bHLH domain.

As to quaternary structure, homodimer. Interacts with the N-terminus of BZR2/BES1. In terms of tissue distribution, expressed constitutively in roots, leaves, stems, and flowers.

Its subcellular location is the nucleus. Functionally, positive brassinosteroid-signaling protein. The protein is Transcription factor BIM2 (BIM2) of Arabidopsis thaliana (Mouse-ear cress).